The primary structure comprises 288 residues: Male determiner protein Nix (288 aa).

3 RRM domains span residues 19-94 (YCIY…LPLS), 108-179 (IVVY…KVER), and 205-282 (RSIG…FVPE).

Functionally, male determiner protein (M-factor) that controls male somatic sexual differentiation. Acts as a dominant factor that regulates the mRNA splicing of doublesex (dsx) or fruitless (fru) transcripts and promotes expression of male splice forms of dsx and fru. The chain is Male determiner protein Nix from Aedes aegypti (Yellowfever mosquito).